The chain runs to 359 residues: N-acetyl-gamma-glutamyl-phosphate reductase (359 aa).

Cys162 is a catalytic residue.

Belongs to the NAGSA dehydrogenase family. Type 1 subfamily.

The protein resides in the cytoplasm. The catalysed reaction is N-acetyl-L-glutamate 5-semialdehyde + phosphate + NADP(+) = N-acetyl-L-glutamyl 5-phosphate + NADPH + H(+). It participates in amino-acid biosynthesis; L-arginine biosynthesis; N(2)-acetyl-L-ornithine from L-glutamate: step 3/4. Catalyzes the NADPH-dependent reduction of N-acetyl-5-glutamyl phosphate to yield N-acetyl-L-glutamate 5-semialdehyde. The protein is N-acetyl-gamma-glutamyl-phosphate reductase of Prochlorococcus marinus (strain NATL1A).